A 396-amino-acid polypeptide reads, in one-letter code: Ribosomal RNA large subunit methyltransferase I (396 aa).

Residues Ser2–Arg81 form the PUA domain.

The protein belongs to the methyltransferase superfamily. RlmI family.

Its subcellular location is the cytoplasm. The enzyme catalyses cytidine(1962) in 23S rRNA + S-adenosyl-L-methionine = 5-methylcytidine(1962) in 23S rRNA + S-adenosyl-L-homocysteine + H(+). Its function is as follows. Specifically methylates the cytosine at position 1962 (m5C1962) of 23S rRNA. The chain is Ribosomal RNA large subunit methyltransferase I from Shigella boydii serotype 4 (strain Sb227).